The primary structure comprises 221 residues: Eukaryotic translation initiation factor 4E-2 (221 aa).

The segment covering 1–20 has biased composition (basic and acidic residues); it reads MADELNKAALEEYKSSSVED. Residues 1–36 form a disordered region; the sequence is MADELNKAALEEYKSSSVEDRGEEGEIVGESDDTAS. Positions 21-33 are enriched in acidic residues; the sequence is RGEEGEIVGESDD. 2 EIF4G-binding regions span residues 46–49 and 56–92; these read HPLE and FDNPSGKSKQAAWGSSIRPIYTFSTAEDFWSVYNNIH. MRNA is bound by residues 64-69, Lys96, and 114-115; these read KQAAWG and WE. A disulfide bridge connects residues Cys119 and Cys157. The EIF4G-binding stretch occupies residues 140 to 149; sequence YTLLALIGEQ. Residues 164 to 169 and 209 to 213 each bind mRNA; these read RVRQEK and KKLDR.

Belongs to the eukaryotic initiation factor 4E family. EIF4F is a multi-subunit complex, the composition of which varies with external and internal environmental conditions. It is composed of at least EIF4A, EIF4E and EIF4G. EIF4E is also known to interact with other partners. In higher plants two isoforms of EIF4F have been identified, named isoform EIF4F and isoform EIF(iso)4F. Isoform EIF4F has subunits p220 and p26, whereas isoform EIF(iso)4F has subunits p82 and p28. As to quaternary structure, (Microbial infection) Interacts with potyvirus viral genome-linked protein (VPg) in the nucleus; mostly potato virus Y (PVY-LYE84) and tobacco etch virus (TEV-HAT) VPg, but not with PVY-LYE90 and pepper mottle virus (PepMoV) VPg; these interactions are possible in susceptible hosts but impaired in resistant plants. In terms of processing, according to the redox status, the Cys-119-Cys-157 disulfide bridge may have a role in regulating protein function by affecting its ability to bind capped mRNA.

The protein localises to the nucleus. Its subcellular location is the cytoplasm. In terms of biological role, component of the protein complex eIF4F, which is involved in the recognition of the mRNA cap, ATP-dependent unwinding of 5'-terminal secondary structure and recruitment of mRNA to the ribosome. Recognizes and binds the 7-methylguanosine-containing mRNA cap during an early step in the initiation of protein synthesis and facilitates ribosome binding by inducing the unwinding of the mRNAs secondary structures. Key component of recessive resistance to potyviruses. (Microbial infection) Susceptibility host factor required for viral infection (e.g. potato virus Y (PVY) and tobacco etch virus (TEV)) by recruiting viral RNAs to the host ribosomal complex via an interaction with viral genome-linked protein (VPg). In Solanum lycopersicum (Tomato), this protein is Eukaryotic translation initiation factor 4E-2.